Here is a 325-residue protein sequence, read N- to C-terminus: Beta-ketoacyl-[acyl-carrier-protein] synthase III (325 aa).

Catalysis depends on residues C119 and H252. The segment at 253-257 (QANIR) is ACP-binding. Residue N282 is part of the active site.

Belongs to the thiolase-like superfamily. FabH family. In terms of assembly, homodimer.

The protein localises to the cytoplasm. It carries out the reaction malonyl-[ACP] + acetyl-CoA + H(+) = 3-oxobutanoyl-[ACP] + CO2 + CoA. Its pathway is lipid metabolism; fatty acid biosynthesis. Its function is as follows. Catalyzes the condensation reaction of fatty acid synthesis by the addition to an acyl acceptor of two carbons from malonyl-ACP. Catalyzes the first condensation reaction which initiates fatty acid synthesis and may therefore play a role in governing the total rate of fatty acid production. Possesses both acetoacetyl-ACP synthase and acetyl transacylase activities. Its substrate specificity determines the biosynthesis of branched-chain and/or straight-chain of fatty acids. This is Beta-ketoacyl-[acyl-carrier-protein] synthase III from Variovorax paradoxus (strain S110).